The chain runs to 199 residues: MAFMEHSALTPHRRELCSRTIWLARKIRSDLTALTESYVKHQGLNKNINLDSVDGVPMASTDQWSELTEAERLQENLQAYRTFHIMLARLLEDQQVHFTPAEGDFHQAIHTLLLQVAAFAYQIEELMVLLECNIPPKDADGTPVIGGDGLFEKKLWGLKVLQELSHWTVRSIHDLRVISCHQTGIPAHGSHYIANDKEM.

It belongs to the CNTF family. In terms of tissue distribution, nervous system.

It localises to the cytoplasm. Its function is as follows. CNTF is a survival factor for various neuronal cell types. Seems to prevent the degeneration of motor axons after axotomy. In Oryctolagus cuniculus (Rabbit), this protein is Ciliary neurotrophic factor (CNTF).